Reading from the N-terminus, the 318-residue chain is Taste receptor type 2 member 60 (318 aa).

At 1-7 the chain is on the extracellular side; sequence MNGDHMV. A helical transmembrane segment spans residues 8-28; that stretch reads LGSSVTDKKAIILVTILLLLR. Topologically, residues 29–40 are cytoplasmic; sequence LVAIAGNGFITA. A helical membrane pass occupies residues 41 to 61; the sequence is ALGVEWVLRRMLLPCDKLLVS. The Extracellular portion of the chain corresponds to 62–88; that stretch reads LGASRFCLQSVVMGKTIYVFLHPMAFP. Residues 89–109 traverse the membrane as a helical segment; the sequence is YNPVLQFLAFQWDFLNAATLW. Residues 110–128 are Cytoplasmic-facing; sequence SSTWLSVFYCVKIATFTHP. Residues 129–149 traverse the membrane as a helical segment; the sequence is VFFWLKHKLSGWLPWMLFSSV. At 150-183 the chain is on the extracellular side; that stretch reads GLSSFTTILFFIGNHRMYQNYLRNHLQPWNVTGD. The N-linked (GlcNAc...) asparagine glycan is linked to Asn179. The chain crosses the membrane as a helical span at residues 184–204; it reads SIRSYCEKFYLFPLKMITWTM. The Cytoplasmic segment spans residues 205–234; it reads PTAVFFICMILLITSLGRHRKKALLTTSGF. A helical transmembrane segment spans residues 235 to 255; that stretch reads REPSVQAHIKALLALLSFAML. Residues 256-264 lie on the Extracellular side of the membrane; it reads FISYFLSLV. A helical transmembrane segment spans residues 265–285; the sequence is FSAAGIFPPLDFKFWVWESVI. The Cytoplasmic portion of the chain corresponds to 286–318; that stretch reads YLCAAVHPIILLFSNCRLRAVLKSRRSSRCGTP.

The protein belongs to the G-protein coupled receptor T2R family. Expressed in subsets of taste receptor cells of the tongue and exclusively in gustducin-positive cells.

It is found in the membrane. In terms of biological role, receptor that may play a role in the perception of bitterness and is gustducin-linked. May play a role in sensing the chemical composition of the gastrointestinal content. The activity of this receptor may stimulate alpha gustducin, mediate PLC-beta-2 activation and lead to the gating of TRPM5. The sequence is that of Taste receptor type 2 member 60 (TAS2R60) from Homo sapiens (Human).